Reading from the N-terminus, the 439-residue chain is Gnt-II system L-idonate transporter (439 aa).

Over 1–11 (MPLIIIAAGVA) the chain is Periplasmic. Residues 12 to 34 (LLLILMIGFKVNGFIALVLVAAV) form a helical membrane-spanning segment. At 35 to 53 (VGFAEGMDAQAVLHSIQNG) the chain is on the cytoplasmic side. A helical membrane pass occupies residues 54–76 (IGSTLGGLAMILGFGAMLGKLIS). Over 77-96 (DTGAAQRIATTLIATFGKKR) the chain is Periplasmic. The helical transmembrane segment at 97 to 114 (VQWALVITGLVVGLAMFF) threads the bilayer. Residues 115–118 (EVGF) lie on the Cytoplasmic side of the membrane. The helical transmembrane segment at 119 to 141 (VLLLPLVFTIVASSGLPLLYVGV) threads the bilayer. Residues 142–170 (PMVAALSVTHCFLPPHPGPTAIATIFEAN) are Periplasmic-facing. Residues 171-193 (LGTTLLYGFIITIPTVIVAGPLF) traverse the membrane as a helical segment. Topologically, residues 194–218 (SKLLTRFEKAPPEGLFNPHLFSEEE) are cytoplasmic. A helical transmembrane segment spans residues 219–241 (MPSFWNSIFAAVIPVILMAIAAV). The Periplasmic segment spans residues 242–253 (CEITLPKTNTVR). The chain crosses the membrane as a helical span at residues 254–276 (LFFEFVGNPAVALFIAIVIAIFT). At 277–290 (LGRRNGRTIEQIMD) the chain is on the cytoplasmic side. A helical membrane pass occupies residues 291–310 (IIGDSIGAIAMIVFIIAGGG). The Periplasmic segment spans residues 311 to 322 (AFKQVLVDSGVG). A helical transmembrane segment spans residues 323–345 (HYISHLMTGTTLSPLLMCWTVAA). Residues 346–348 (LLR) lie on the Cytoplasmic side of the membrane. The helical transmembrane segment at 349-371 (IALGSATVAAITTAGVVLPIINV) threads the bilayer. Residues 372–377 (THADPA) are Periplasmic-facing. A helical membrane pass occupies residues 378 to 400 (LMVLATGAGSVIASHVNDPGFWL). Residues 401 to 414 (FKGYFNLTVGETLR) are Cytoplasmic-facing. The chain crosses the membrane as a helical span at residues 415–437 (TWTVMETLISIMGLLGVLAINAV). Residues 438–439 (LH) lie on the Periplasmic side of the membrane.

This sequence belongs to the GntP permease family.

The protein resides in the cell inner membrane. It carries out the reaction L-idonate(in) + H(+)(in) = L-idonate(out) + H(+)(out). The enzyme catalyses D-gluconate(in) + H(+)(in) = D-gluconate(out) + H(+)(out). The catalysed reaction is 5-dehydro-D-gluconate(in) + H(+)(in) = 5-dehydro-D-gluconate(out) + H(+)(out). It functions in the pathway carbohydrate acid metabolism; L-idonate degradation. In terms of biological role, transporter which is probably involved in L-idonate metabolism. Transports L-idonate from the periplasm across the inner membrane. Can also transport D-gluconate and 5-keto-D-gluconate. It has been reported that gluconate uptake probably occurs via a proton-symport mechanism in E.coli. In Escherichia coli (strain K12), this protein is Gnt-II system L-idonate transporter.